Here is a 71-residue protein sequence, read N- to C-terminus: UPF0346 protein SAK_1533 (71 aa).

Belongs to the UPF0346 family.

The polypeptide is UPF0346 protein SAK_1533 (Streptococcus agalactiae serotype Ia (strain ATCC 27591 / A909 / CDC SS700)).